Here is a 645-residue protein sequence, read N- to C-terminus: Chaperone protein DnaK (645 aa).

The residue at position 201 (Thr-201) is a Phosphothreonine; by autocatalysis. Positions 606–629 are enriched in low complexity; it reads NTNNATAGDNNTTDTGSSSNSDGS. The tract at residues 606 to 645 is disordered; the sequence is NTNNATAGDNNTTDTGSSSNSDGSKVVDSDYQEIDKKDGK. A compositionally biased stretch (basic and acidic residues) spans 630 to 645; the sequence is KVVDSDYQEIDKKDGK.

The protein belongs to the heat shock protein 70 family.

Functionally, acts as a chaperone. The polypeptide is Chaperone protein DnaK (Ehrlichia ruminantium (strain Welgevonden)).